The chain runs to 251 residues: Imidazole glycerol phosphate synthase subunit HisF (251 aa).

Active-site residues include D11 and D130.

The protein belongs to the HisA/HisF family. Heterodimer of HisH and HisF.

The protein localises to the cytoplasm. The enzyme catalyses 5-[(5-phospho-1-deoxy-D-ribulos-1-ylimino)methylamino]-1-(5-phospho-beta-D-ribosyl)imidazole-4-carboxamide + L-glutamine = D-erythro-1-(imidazol-4-yl)glycerol 3-phosphate + 5-amino-1-(5-phospho-beta-D-ribosyl)imidazole-4-carboxamide + L-glutamate + H(+). It functions in the pathway amino-acid biosynthesis; L-histidine biosynthesis; L-histidine from 5-phospho-alpha-D-ribose 1-diphosphate: step 5/9. In terms of biological role, IGPS catalyzes the conversion of PRFAR and glutamine to IGP, AICAR and glutamate. The HisF subunit catalyzes the cyclization activity that produces IGP and AICAR from PRFAR using the ammonia provided by the HisH subunit. In Pelagibacter ubique (strain HTCC1062), this protein is Imidazole glycerol phosphate synthase subunit HisF.